The primary structure comprises 128 residues: Large ribosomal subunit protein bL17 (128 aa).

Belongs to the bacterial ribosomal protein bL17 family. Part of the 50S ribosomal subunit. Contacts protein L32.

In Streptococcus mutans serotype c (strain ATCC 700610 / UA159), this protein is Large ribosomal subunit protein bL17.